The following is a 453-amino-acid chain: Gamma-aminobutyric acid receptor subunit alpha-6 (453 aa).

Residues 1 to 19 form the signal peptide; sequence MVLLLPWLFIILWLENAQA. Residues 20 to 243 are Extracellular-facing; the sequence is QLEDEGNFYS…FHLQRKMGYF (224 aa). A glycan (N-linked (GlcNAc...) asparagine) is linked at Asn-31. Arg-84 is a binding site for 4-aminobutanoate. Asn-128 and Asn-141 each carry an N-linked (GlcNAc...) asparagine glycan. Thr-147 lines the 4-aminobutanoate pocket. Cys-156 and Cys-170 are oxidised to a cystine. Residues 244-264 form a helical membrane-spanning segment; the sequence is MIQIYTPCIMTVILSQVSFWI. The Cytoplasmic portion of the chain corresponds to 265 to 270; the sequence is NKESVP. Residues 271-290 traverse the membrane as a helical segment; the sequence is ARTVFGITTVLTMTTLSISA. Residues 291–304 are Extracellular-facing; sequence RHSLPKVSYATAMD. A helical transmembrane segment spans residues 305–325; that stretch reads WFIAVCFAFVFSALIEFAAVN. Over 326-422 the chain is Cytoplasmic; that stretch reads YFTNLQSQKA…GTSKIDQYSR (97 aa). A Phosphoserine modification is found at Ser-375. Residues 423 to 443 traverse the membrane as a helical segment; the sequence is ILFPVAFAGFNLVYWIVYLSK. Residues 444 to 453 lie on the Extracellular side of the membrane; sequence DTMEVSSTVE.

It belongs to the ligand-gated ion channel (TC 1.A.9) family. Gamma-aminobutyric acid receptor (TC 1.A.9.5) subfamily. GABRA6 sub-subfamily. In terms of assembly, heteropentamer, formed by a combination of alpha (GABRA1-6), beta (GABRB1-3), gamma (GABRG1-3), delta (GABRD), epsilon (GABRE), rho (GABRR1-3), pi (GABRP) and theta (GABRQ) chains, each subunit exhibiting distinct physiological and pharmacological properties. Binds UBQLN1. As to expression, expressed in brain, in cerebellar granule cells.

The protein resides in the postsynaptic cell membrane. The protein localises to the cell membrane. It carries out the reaction chloride(in) = chloride(out). Alpha subunit of the heteropentameric ligand-gated chloride channel gated by gamma-aminobutyric acid (GABA), a major inhibitory neurotransmitter in the brain. GABA-gated chloride channels, also named GABA(A) receptors (GABAAR), consist of five subunits arranged around a central pore and contain GABA active binding site(s) located at the alpha and beta subunit interface(s). When activated by GABA, GABAARs selectively allow the flow of chloride anions across the cell membrane down their electrochemical gradient. Alpha-6/GABRA6 subunits are found at both synaptic and extrasynaptic sites. Chloride influx into the postsynaptic neuron following GABAAR opening decreases the neuron ability to generate a new action potential, thereby reducing nerve transmission. Extrasynaptic alpha-6-containing receptors contribute to the tonic GABAergic inhibition. Alpha-6 subunits are also present on glutamatergic synapses. This Mus musculus (Mouse) protein is Gamma-aminobutyric acid receptor subunit alpha-6.